The chain runs to 1043 residues: MTTTNTSIFGPRVNNSKFNNNNNNNNNNNNNNNNTSNNNNSNIIKPPQVVQETQQQQQAQQQPLQTNEEVCVICKSKNVQVCTGCLMVYYCGAEHQNIDWPNHKSLCSGLNRRNDLLDRAEKSKDLRKKLQSDIFSSGNRVSNSNNNSSIYSNSTGNINNNNNSNNNNIKGGIGGGAVTNSSTVMAPERKSIAISNIKHLQQQIQQTQQTQQQPPPTTTSIPTQPNSSSFNKPTAKKPGTSFKSSSSGDNTPINQSPSSSSSSLVSSTNNNNNNNNNNNNNNNINSNSNNMSGSSGGIKALQNQLQNSINNKPSNTTSNSPNPSPPSSTFVPNSNNNSNSNSSSGSGKSNLNISLKSSTSSSPVTSTYLYNNNNSNSNSNSNNSSTETTTCISSNSNNSSNIENSDNTNEENGMKNIKNKLSQINFGAPPPSFKKPTSKVIENEDNNNSNNDGTLKQSSSSDSIYFNNNNNNNNNNNNNNNNNNNNNNNNNNNNNNNNNNNNNNNNNNNNNNNNNNNNNNSNNNNFDINNSNNIINNKQSTCSSIDGLSYNNNNSGSSLKNSVPPTTSNTPPRKRSSGGSSSSNNSNIGSNGNRIGFIKEHKKNQSLPDSFVDFYQSNKNQSNGYESLLDNDDNKTRGYGSFNENDDSHEECDDDDDDDDGGGQDGDDGLDGTEFKRGRNRPTGLRTNNNAVFEWESGTIEYSTNNTSQHKKLGVGSRGGNSFSKDTQSQSTNSTTTDDHQTGSILNSNSGSSDDLQQQQTQTQQQQSQLSAGVGRIAGKFRMIGGDIKKKAAIVGTLTKNKVSEVTSKSKSSTSVNNNNNDEVDHNENNNNNNNNINNNNNNNNNNIENIIFGIPLEEAVKKSATLHPLIPDVIYKSIEYIREKGIQEEGIFRLSGSANAITLLKNEFDRGVNVDLYQQLDQHVVSGILKLYLRQIPETLFTQDFGEELEELRVGGNSSDAISKRIAGSIILLQRLPESNRCILHYLCNLLNAISFEPSTKMGTVNLAIVFAPTLGVSVEVMTCLISYYDEIFGIQTYNYNS.

The segment at 1 to 44 (MTTTNTSIFGPRVNNSKFNNNNNNNNNNNNNNNNTSNNNNSNII) is disordered. The segment covering 14 to 44 (NNSKFNNNNNNNNNNNNNNNNTSNNNNSNII) has biased composition (low complexity). Zn(2+)-binding residues include cysteine 71, cysteine 74, cysteine 82, cysteine 85, cysteine 91, histidine 95, histidine 103, and cysteine 107. The MYND-type; atypical zinc finger occupies 71–107 (CVICKSKNVQVCTGCLMVYYCGAEHQNIDWPNHKSLC). Disordered regions lie at residues 137–163 (SGNR…NNNN), 199–532 (HLQQ…NNSN), 546–594 (DGLS…NGNR), 614–690 (FYQS…TNNN), 706–772 (NTSQ…QLSA), and 801–842 (NKVS…NNNN). A compositionally biased stretch (low complexity) spans 201–225 (QQQIQQTQQTQQQPPPTTTSIPTQP). The segment covering 241-253 (SFKSSSSGDNTPI) has biased composition (polar residues). Low complexity-rich tracts occupy residues 254–293 (NQSP…NMSG) and 307–411 (NSIN…TNEE). Residues 453–466 (GTLKQSSSSDSIYF) show a composition bias toward polar residues. Low complexity-rich tracts occupy residues 467–532 (NNNN…NNSN) and 547–594 (GLSY…NGNR). Positions 615-625 (YQSNKNQSNGY) are enriched in polar residues. Over residues 644-671 (ENDDSHEECDDDDDDDDGGGQDGDDGLD) the composition is skewed to acidic residues. Low complexity-rich tracts occupy residues 726–736 (DTQSQSTNSTT), 752–771 (SSDD…SQLS), 801–821 (NKVS…NNNN), and 829–842 (NNNN…NNNN). Residues 825–852 (DHNENNNNNNNNINNNNNNNNNNIENII) adopt a coiled-coil conformation. The Rho-GAP domain occupies 855–1043 (IPLEEAVKKS…FGIQTYNYNS (189 aa)).

The protein localises to the cytoplasm. Rho GTPase-activating protein involved in the signal transduction pathway. The sequence is that of Rho GTPase-activating protein gacZ (gacZ) from Dictyostelium discoideum (Social amoeba).